Reading from the N-terminus, the 147-residue chain is uncharacterized protein (147 aa).

Residues 1-59 (MGAELVKWVKSHKIDAHIITFVAKMPYIDSIKLLEAGAKGCVWKTSHPAKLNRAIDSIS) enclose the Response regulatory domain. The 66-residue stretch at 78–143 (RYSSDNQLTN…ELIKTALRMG (66 aa)) folds into the HTH luxR-type domain. A DNA-binding region (H-T-H motif) is located at residues 102–121 (NKEIANFLQLSRKTVETHRL).

In terms of processing, overexpressed protein is phosphorylated in vitro by non-cognate histidine kinases BarA and UhpB.

This is an uncharacterized protein from Escherichia coli (strain K12).